Consider the following 162-residue polypeptide: Nucleotide-binding protein A2cp1_0112 (162 aa).

It belongs to the YajQ family.

Its function is as follows. Nucleotide-binding protein. This is Nucleotide-binding protein A2cp1_0112 from Anaeromyxobacter dehalogenans (strain 2CP-1 / ATCC BAA-258).